Here is a 1387-residue protein sequence, read N- to C-terminus: DNA-directed RNA polymerase subunit beta'' (1387 aa).

4 residues coordinate Zn(2+): Cys-220, Cys-291, Cys-298, and Cys-301.

This sequence belongs to the RNA polymerase beta' chain family. RpoC2 subfamily. In plastids the minimal PEP RNA polymerase catalytic core is composed of four subunits: alpha, beta, beta', and beta''. When a (nuclear-encoded) sigma factor is associated with the core the holoenzyme is formed, which can initiate transcription. Zn(2+) is required as a cofactor.

The protein resides in the plastid. It localises to the chloroplast. It carries out the reaction RNA(n) + a ribonucleoside 5'-triphosphate = RNA(n+1) + diphosphate. Its function is as follows. DNA-dependent RNA polymerase catalyzes the transcription of DNA into RNA using the four ribonucleoside triphosphates as substrates. This chain is DNA-directed RNA polymerase subunit beta'', found in Carica papaya (Papaya).